A 274-amino-acid polypeptide reads, in one-letter code: Dermonecrotic toxin SaSicTox-betaIIB1 (274 aa).

The active site involves His-5. Positions 25 and 27 each coordinate Mg(2+). Catalysis depends on His-41, which acts as the Nucleophile. Intrachain disulfides connect Cys-45–Cys-51 and Cys-47–Cys-190. Position 85 (Asp-85) interacts with Mg(2+).

This sequence belongs to the arthropod phospholipase D family. Class II subfamily. It depends on Mg(2+) as a cofactor. In terms of tissue distribution, expressed by the venom gland.

Its subcellular location is the secreted. The catalysed reaction is an N-(acyl)-sphingosylphosphocholine = an N-(acyl)-sphingosyl-1,3-cyclic phosphate + choline. The enzyme catalyses an N-(acyl)-sphingosylphosphoethanolamine = an N-(acyl)-sphingosyl-1,3-cyclic phosphate + ethanolamine. It catalyses the reaction a 1-acyl-sn-glycero-3-phosphocholine = a 1-acyl-sn-glycero-2,3-cyclic phosphate + choline. It carries out the reaction a 1-acyl-sn-glycero-3-phosphoethanolamine = a 1-acyl-sn-glycero-2,3-cyclic phosphate + ethanolamine. Functionally, dermonecrotic toxins cleave the phosphodiester linkage between the phosphate and headgroup of certain phospholipids (sphingolipid and lysolipid substrates), forming an alcohol (often choline) and a cyclic phosphate. This toxin acts on sphingomyelin (SM). It may also act on ceramide phosphoethanolamine (CPE), lysophosphatidylcholine (LPC) and lysophosphatidylethanolamine (LPE), but not on lysophosphatidylserine (LPS), and lysophosphatidylglycerol (LPG). It acts by transphosphatidylation, releasing exclusively cyclic phosphate products as second products. Induces dermonecrosis, hemolysis, increased vascular permeability, edema, inflammatory response, and platelet aggregation. The chain is Dermonecrotic toxin SaSicTox-betaIIB1 from Sicarius albospinosus (Six-eyed crab spider).